The chain runs to 256 residues: Proteasome subunit alpha (256 aa).

Residues 235–256 (ELDSNGSDGNGDAPELNGGSSD) are disordered.

This sequence belongs to the peptidase T1A family. In terms of assembly, the 20S proteasome core is composed of 14 alpha and 14 beta subunits that assemble into four stacked heptameric rings, resulting in a barrel-shaped structure. The two inner rings, each composed of seven catalytic beta subunits, are sandwiched by two outer rings, each composed of seven alpha subunits. The catalytic chamber with the active sites is on the inside of the barrel. Has a gated structure, the ends of the cylinder being occluded by the N-termini of the alpha-subunits. Is capped by the proteasome-associated ATPase, ARC.

The protein resides in the cytoplasm. Its pathway is protein degradation; proteasomal Pup-dependent pathway. The formation of the proteasomal ATPase ARC-20S proteasome complex, likely via the docking of the C-termini of ARC into the intersubunit pockets in the alpha-rings, may trigger opening of the gate for substrate entry. Interconversion between the open-gate and close-gate conformations leads to a dynamic regulation of the 20S proteasome proteolysis activity. Functionally, component of the proteasome core, a large protease complex with broad specificity involved in protein degradation. This chain is Proteasome subunit alpha, found in Mycolicibacterium paratuberculosis (strain ATCC BAA-968 / K-10) (Mycobacterium paratuberculosis).